Consider the following 95-residue polypeptide: Citrate lyase acyl carrier protein (95 aa).

S14 carries the O-(phosphoribosyl dephospho-coenzyme A)serine modification.

This sequence belongs to the CitD family. As to quaternary structure, oligomer with a subunit composition of (alpha,beta,gamma)6.

Its subcellular location is the cytoplasm. Functionally, covalent carrier of the coenzyme of citrate lyase. This is Citrate lyase acyl carrier protein from Haemophilus influenzae (strain PittEE).